Here is a 264-residue protein sequence, read N- to C-terminus: Thymidylate synthase (264 aa).

Arg-21 serves as a coordination point for dUMP. His-51 lines the (6R)-5,10-methylene-5,6,7,8-tetrahydrofolate pocket. Residue 126–127 (RR) participates in dUMP binding. Cys-146 (nucleophile) is an active-site residue. Residues 166 to 169 (RSAD), Asn-177, and 207 to 209 (HLY) contribute to the dUMP site. Asp-169 contributes to the (6R)-5,10-methylene-5,6,7,8-tetrahydrofolate binding site. Ala-263 contacts (6R)-5,10-methylene-5,6,7,8-tetrahydrofolate.

The protein belongs to the thymidylate synthase family. Bacterial-type ThyA subfamily. Homodimer.

Its subcellular location is the cytoplasm. It carries out the reaction dUMP + (6R)-5,10-methylene-5,6,7,8-tetrahydrofolate = 7,8-dihydrofolate + dTMP. It participates in pyrimidine metabolism; dTTP biosynthesis. In terms of biological role, catalyzes the reductive methylation of 2'-deoxyuridine-5'-monophosphate (dUMP) to 2'-deoxythymidine-5'-monophosphate (dTMP) while utilizing 5,10-methylenetetrahydrofolate (mTHF) as the methyl donor and reductant in the reaction, yielding dihydrofolate (DHF) as a by-product. This enzymatic reaction provides an intracellular de novo source of dTMP, an essential precursor for DNA biosynthesis. This is Thymidylate synthase from Methylorubrum extorquens (strain CM4 / NCIMB 13688) (Methylobacterium extorquens).